Here is a 272-residue protein sequence, read N- to C-terminus: NAD kinase (272 aa).

Asp-50 acts as the Proton acceptor in catalysis. NAD(+)-binding positions include Asp-50–Gly-51, Asn-126–Glu-127, Arg-152, Asp-154, Thr-165–Ser-170, and Ala-189.

It belongs to the NAD kinase family. It depends on a divalent metal cation as a cofactor.

It is found in the cytoplasm. The enzyme catalyses NAD(+) + ATP = ADP + NADP(+) + H(+). Functionally, involved in the regulation of the intracellular balance of NAD and NADP, and is a key enzyme in the biosynthesis of NADP. Catalyzes specifically the phosphorylation on 2'-hydroxyl of the adenosine moiety of NAD to yield NADP. This is NAD kinase from Streptococcus pneumoniae (strain Hungary19A-6).